The following is a 72-amino-acid chain: Small ribosomal subunit protein eS31 (72 aa).

Zn(2+) is bound by residues Cys-32, Cys-35, Cys-51, and Cys-54. Residues 32 to 54 (CPRCGSVMAYHKEPVPRWHCGKC) form a C4-type zinc finger.

Belongs to the eukaryotic ribosomal protein eS31 family. As to quaternary structure, part of the 30S ribosomal subunit. Requires Zn(2+) as cofactor.

This chain is Small ribosomal subunit protein eS31, found in Caldivirga maquilingensis (strain ATCC 700844 / DSM 13496 / JCM 10307 / IC-167).